The primary structure comprises 618 residues: Arginine--tRNA ligase (618 aa).

The 'HIGH' region motif lies at 113-123; sequence ANPIHPLHIGH.

Belongs to the class-I aminoacyl-tRNA synthetase family.

The protein localises to the cytoplasm. It carries out the reaction tRNA(Arg) + L-arginine + ATP = L-arginyl-tRNA(Arg) + AMP + diphosphate. This Sulfolobus acidocaldarius (strain ATCC 33909 / DSM 639 / JCM 8929 / NBRC 15157 / NCIMB 11770) protein is Arginine--tRNA ligase.